A 252-amino-acid polypeptide reads, in one-letter code: Geranylgeranylglyceryl phosphate synthase (252 aa).

Positions 27 and 56 each coordinate Mg(2+). Sn-glycerol 1-phosphate is bound by residues 175–181 (YLEAGSG), 206–207 (GG), and 228–229 (GT).

It belongs to the GGGP/HepGP synthase family. Group II subfamily. Requires Mg(2+) as cofactor.

The protein localises to the cytoplasm. It carries out the reaction sn-glycerol 1-phosphate + (2E,6E,10E)-geranylgeranyl diphosphate = sn-3-O-(geranylgeranyl)glycerol 1-phosphate + diphosphate. Its pathway is membrane lipid metabolism; glycerophospholipid metabolism. Prenyltransferase that catalyzes the transfer of the geranylgeranyl moiety of geranylgeranyl diphosphate (GGPP) to the C3 hydroxyl of sn-glycerol-1-phosphate (G1P). This reaction is the first ether-bond-formation step in the biosynthesis of archaeal membrane lipids. This is Geranylgeranylglyceryl phosphate synthase from Pyrococcus abyssi (strain GE5 / Orsay).